A 389-amino-acid polypeptide reads, in one-letter code: Apoptosis inhibitor U19 (389 aa).

It belongs to the beta-herpesvirinae UL38 protein family. In terms of assembly, interacts with host MDM2; this interaction leads to the stabilization of host TP53.

The protein resides in the host cytoplasm. It is found in the host nucleus. Functionally, plays a role in the inhibition of host apoptosis to facilitate efficient viral replication. Promotes stabilization and inactivation of host TP53 through interaction with host MDM2. This is Apoptosis inhibitor U19 (U19) from Human herpesvirus 6A (strain Uganda-1102) (HHV-6 variant A).